The primary structure comprises 401 residues: L-rhamnonate dehydratase (401 aa).

His-29 and Arg-55 together coordinate substrate. The Mg(2+) site is built by Asp-222, Glu-248, and Glu-276. The active-site Proton acceptor is His-325. Glu-345 lines the substrate pocket.

This sequence belongs to the mandelate racemase/muconate lactonizing enzyme family. RhamD subfamily. Homooctamer; tetramer of dimers. The cofactor is Mg(2+).

It carries out the reaction L-rhamnonate = 2-dehydro-3-deoxy-L-rhamnonate + H2O. Functionally, catalyzes the dehydration of L-rhamnonate to 2-keto-3-deoxy-L-rhamnonate (KDR). This chain is L-rhamnonate dehydratase, found in Salmonella schwarzengrund (strain CVM19633).